A 556-amino-acid chain; its full sequence is Protein misato homolog 1 (556 aa).

A Phosphoserine modification is found at serine 41.

This sequence belongs to the misato family.

The protein localises to the mitochondrion outer membrane. It localises to the cytoplasm. Functionally, involved in the regulation of mitochondrial distribution and morphology. Required for mitochondrial fusion and mitochondrial network formation. The sequence is that of Protein misato homolog 1 (Msto1) from Mus musculus (Mouse).